The sequence spans 254 residues: Flavin-dependent thymidylate synthase (254 aa).

In terms of domain architecture, ThyX spans 7 to 237 (LRVQLIARTE…PAVFADFEIY (231 aa)). FAD-binding positions include Ser71, 95–97 (RHR), and Gln103. DUMP-binding positions include 92 to 95 (ELIR), 103 to 107 (QLSQR), and Arg176. A ThyX motif motif is present at residues 95 to 105 (RHRHFSYSQLS). Residues 192-194 (NYR) and His198 contribute to the FAD site. Arg203 contacts dUMP. Arg203 serves as the catalytic Involved in ionization of N3 of dUMP, leading to its activation.

The protein belongs to the thymidylate synthase ThyX family. In terms of assembly, homotetramer. The cofactor is FAD.

The catalysed reaction is dUMP + (6R)-5,10-methylene-5,6,7,8-tetrahydrofolate + NADPH + H(+) = dTMP + (6S)-5,6,7,8-tetrahydrofolate + NADP(+). The protein operates within pyrimidine metabolism; dTTP biosynthesis. Its function is as follows. Catalyzes the reductive methylation of 2'-deoxyuridine-5'-monophosphate (dUMP) to 2'-deoxythymidine-5'-monophosphate (dTMP) while utilizing 5,10-methylenetetrahydrofolate (mTHF) as the methyl donor, and NADPH and FADH(2) as the reductant. The polypeptide is Flavin-dependent thymidylate synthase (Mycobacterium sp. (strain JLS)).